The sequence spans 111 residues: Universal stress protein B (111 aa).

The next 2 helical transmembrane spans lie at 1 to 21 and 90 to 110; these read MFST…NMMR and FILT…MLIW.

The protein belongs to the universal stress protein B family.

It is found in the cell inner membrane. The chain is Universal stress protein B from Photorhabdus laumondii subsp. laumondii (strain DSM 15139 / CIP 105565 / TT01) (Photorhabdus luminescens subsp. laumondii).